The chain runs to 342 residues: Antihemorrhagic factor HSF (342 aa).

Positions 1 to 19 are cleaved as a signal peptide; that stretch reads MNSLVALVLLGQIIGSTLS. Cystatin fetuin-A-type domains lie at 22–130 and 141–254; these read VRGD…VKCH and RNCS…SNCV. The Cell attachment site motif lies at 23 to 25; that stretch reads RGD. Positions 24-108 are indispensable for metalloproteinase inhibition; that stretch reads GDLECDDKEA…RQQHNHAVEM (85 aa). Intrachain disulfides connect cysteine 28-cysteine 332, cysteine 85-cysteine 96, cysteine 110-cysteine 129, cysteine 143-cysteine 146, cysteine 205-cysteine 217, and cysteine 230-cysteine 253. An N-linked (GlcNAc...) asparagine glycan is attached at asparagine 142. N-linked (GlcNAc...) asparagine glycosylation occurs at asparagine 204. Asparagine 282 is a glycosylation site (N-linked (GlcNAc...) asparagine).

It belongs to the fetuin family. Post-translationally, cys-63 may exist in a mixed disulfide form with a thiol compound such as glutathione. In terms of tissue distribution, expressed by the liver.

The protein localises to the secreted. Functionally, inhibits hemorrhagic and proteolytic activities of metalloproteinases (HR1A, HR1B, HR2a, HR2b and H2 proteinase from T.flavodidis and brevilysins H3, H4, H6 and L4 from A.halys brevicaudus). Has no effect on brevilysins H2. Has no effect on papain and cathepsin-B. This chain is Antihemorrhagic factor HSF, found in Protobothrops flavoviridis (Habu).